A 512-amino-acid polypeptide reads, in one-letter code: Putative ankyrin repeat protein FPV233 (512 aa).

8 ANK repeats span residues 45–73 (IPFIPLHQAIEARNIDIIKSIITVDNVNQ), 77–106 (DDTYPIHIICKEPNMLAISYMLRSINQCSV), 136–168 (IQDIDLKYIDKKSKDDIIEITKLLFSYGADINM), 172–201 (HGNSPLHYATENPDQRLTRLLLSKGANPNI), 205–236 (TNKSPLYYSIESDNPDITMLLIDKFIFNNTDP), 238–262 (LSHAIKHYRKPILHALIENGASINA), 266–296 (YGNTPLHYAVSYCKDIDVIKLLLERGVDVNA), and 301–329 (RNLTPLHSSYLKSPRVLKLLLQYGADINS).

The chain is Putative ankyrin repeat protein FPV233 from Vertebrata (FPV).